The following is a 252-amino-acid chain: MSDWNPSLYLHFSAERSRPAVELLARVPLENVEYVADLGCGPDNSTALLQQRWPAARITGIDSSPAMIAEARSALPDCQFVEADIRNWQPVQALDLIFANASLQWLPDHYELFPHLVSLLNPQGVLAVQMPDNWLEPTHVLMREVAWEQNYPDRGREPLAGVHAYYDILSEAGCEVDIWRTTYYHQMPSHQAIIDWVTATGLRPWLQDLTESEQQLFLKRYHQMLEEQYPLQENGQILLAFPRLFIVARRME.

Belongs to the methyltransferase superfamily. Tam family.

It localises to the cytoplasm. The catalysed reaction is trans-aconitate + S-adenosyl-L-methionine = (E)-3-(methoxycarbonyl)pent-2-enedioate + S-adenosyl-L-homocysteine. Functionally, catalyzes the S-adenosylmethionine monomethyl esterification of trans-aconitate. This is Trans-aconitate 2-methyltransferase from Escherichia coli O9:H4 (strain HS).